We begin with the raw amino-acid sequence, 290 residues long: Probable lipid hydrolase 463L (290 aa).

Helical transmembrane passes span 26-46 (TLVLSGGAMRGVYLLGALNGL) and 53-73 (ISTFIGISSGSIICFLLSIGY). Residues 27–207 (LVLSGGAMRG…WNNFPIDIAI (181 aa)) enclose the PNPLA domain. The GXSXG motif lies at 58 to 62 (GISSG). Catalysis depends on Ser-60, which acts as the Nucleophile. Asp-194 serves as the catalytic Proton acceptor. Residues 194–196 (DGG) carry the DGA/G motif.

It is found in the membrane. Its function is as follows. Probable lipid hydrolase. This Invertebrate iridescent virus 6 (IIV-6) protein is Probable lipid hydrolase 463L.